Consider the following 238-residue polypeptide: Nucleoside diphosphate kinase III, chloroplastic/mitochondrial (238 aa).

The N-terminal 85 residues, 1 to 85 (MSSQICRSAS…YMIQDQEVLA (85 aa)), are a transit peptide targeting the chloroplast and mitochondrion. Positions 96, 144, 172, 178, 189, and 199 each coordinate ATP. Histidine 202 serves as the catalytic Pros-phosphohistidine intermediate.

It belongs to the NDK family. In terms of assembly, homohexamer. It depends on Mg(2+) as a cofactor.

It localises to the plastid. The protein localises to the chloroplast thylakoid lumen. It is found in the mitochondrion intermembrane space. The enzyme catalyses a 2'-deoxyribonucleoside 5'-diphosphate + ATP = a 2'-deoxyribonucleoside 5'-triphosphate + ADP. It carries out the reaction a ribonucleoside 5'-diphosphate + ATP = a ribonucleoside 5'-triphosphate + ADP. Functionally, major role in the synthesis of nucleoside triphosphates other than ATP. The ATP gamma phosphate is transferred to the NDP beta phosphate via a ping-pong mechanism, using a phosphorylated active-site intermediate. Shows the highest specificity towards GDP. The sequence is that of Nucleoside diphosphate kinase III, chloroplastic/mitochondrial (NDPK3) from Arabidopsis thaliana (Mouse-ear cress).